Here is a 70-residue protein sequence, read N- to C-terminus: DNA-directed RNA polymerase subunit epsilon (70 aa).

This sequence belongs to the RNA polymerase subunit epsilon family. In terms of assembly, RNAP is composed of a core of 2 alpha, a beta and a beta' subunit. The core is associated with a delta subunit, and at least one of epsilon or omega. When a sigma factor is associated with the core the holoenzyme is formed, which can initiate transcription.

It catalyses the reaction RNA(n) + a ribonucleoside 5'-triphosphate = RNA(n+1) + diphosphate. A non-essential component of RNA polymerase (RNAP). The chain is DNA-directed RNA polymerase subunit epsilon from Leuconostoc mesenteroides subsp. mesenteroides (strain ATCC 8293 / DSM 20343 / BCRC 11652 / CCM 1803 / JCM 6124 / NCDO 523 / NBRC 100496 / NCIMB 8023 / NCTC 12954 / NRRL B-1118 / 37Y).